Reading from the N-terminus, the 438-residue chain is SPbeta prophage-derived uncharacterized protein YopA (438 aa).

A helical transmembrane segment spans residues leucine 391–tyrosine 411.

The protein resides in the cell membrane. This chain is SPbeta prophage-derived uncharacterized protein YopA (yopA), found in Bacillus subtilis (strain 168).